The following is a 179-amino-acid chain: Protein Syd (179 aa).

It belongs to the Syd family.

It localises to the cell inner membrane. In terms of biological role, interacts with the SecY protein in vivo. May bind preferentially to an uncomplexed state of SecY, thus functioning either as a chelating agent for excess SecY in the cell or as a regulatory factor that negatively controls the translocase function. The chain is Protein Syd from Pseudoalteromonas translucida (strain TAC 125).